Reading from the N-terminus, the 309-residue chain is Aspartate carbamoyltransferase catalytic subunit (309 aa).

Carbamoyl phosphate-binding residues include R57 and T58. Residue K86 coordinates L-aspartate. R107, H135, and Q138 together coordinate carbamoyl phosphate. R168 and R228 together coordinate L-aspartate. The carbamoyl phosphate site is built by L267 and P268.

Belongs to the aspartate/ornithine carbamoyltransferase superfamily. ATCase family. In terms of assembly, heterooligomer of catalytic and regulatory chains.

It catalyses the reaction carbamoyl phosphate + L-aspartate = N-carbamoyl-L-aspartate + phosphate + H(+). It functions in the pathway pyrimidine metabolism; UMP biosynthesis via de novo pathway; (S)-dihydroorotate from bicarbonate: step 2/3. Its function is as follows. Catalyzes the condensation of carbamoyl phosphate and aspartate to form carbamoyl aspartate and inorganic phosphate, the committed step in the de novo pyrimidine nucleotide biosynthesis pathway. The protein is Aspartate carbamoyltransferase catalytic subunit of Cenarchaeum symbiosum (strain A).